The following is a 416-amino-acid chain: Counting factor 60 (416 aa).

Positions 1 to 22 (MIKKSALITLFLVSLILGVSLS) are cleaved as a signal peptide. Residues N110, N218, N231, N318, and N411 are each glycosylated (N-linked (GlcNAc...) asparagine).

This sequence belongs to the histidine acid phosphatase family. In terms of assembly, component of the counting factor (CF) complex, which includes cf60, cf50, cf45-1 and ctnA.

It is found in the secreted. Functionally, cell-counting factor that limits the maximum size of the multicellular structure. Does not possess acid phosphatase activity. Cells with decreased levels of this protein form large groups while cells overexpressing this protein form small groups. This chain is Counting factor 60 (cf60), found in Dictyostelium discoideum (Social amoeba).